We begin with the raw amino-acid sequence, 977 residues long: Short transient receptor potential channel 4 (977 aa).

Topologically, residues 1–324 are cytoplasmic; it reads MAQFYYKRNV…YDEFPGWRRR (324 aa). 4 ANK repeats span residues 29–60, 71–93, 96–118, and 141–165; these read LSPS…IYFK, RTAL…LSFN, VGDA…LLNH, and PDIT…VQKG. Zn(2+) is bound by residues His-172, Cys-176, Cys-178, and Cys-181. Residues 223–260 are a coiled coil; sequence LSWELQELSKVENEFKSEYEELSRQCKQFAKDLLDQTR. The segment at residues 325-359 is an intramembrane region (discontinuously helical); that stretch reads HWAVKMVTCFIIGLLFPVFSVCYLIAPKSPLGLFI. Over 360 to 362 the chain is Cytoplasmic; that stretch reads RKP. Residues 363 to 383 form a helical membrane-spanning segment; the sequence is FIKFICHTASYLTFLFLLLLA. At 384–403 the chain is on the extracellular side; it reads SQHIDRSDLNRQGPPPTIVE. The helical transmembrane segment at 404–418 threads the bilayer; the sequence is WMILPWVLGFIWGEI. The Ca(2+) site is built by Glu-417, Gln-420, Asn-435, and Asp-438. Topologically, residues 419–432 are cytoplasmic; that stretch reads KQMWDGGLQDYIHD. Residues 433–453 form a helical membrane-spanning segment; that stretch reads WWNLMDFVMNSLYLATISLKI. At 454-475 the chain is on the extracellular side; it reads VAFVKYSALNPRESWDMWHPTL. Residues 476–498 traverse the membrane as a helical segment; it reads VAEALFAIANIFSSLRLISLFTA. Over 499–511 the chain is Cytoplasmic; sequence NSHLGPLQISLGR. The helical transmembrane segment at 512-534 threads the bilayer; the sequence is MLLDILKFLFIYCLVLLAFANGL. The Extracellular portion of the chain corresponds to 535–599; sequence NQLYFYYEET…HEFTDFVGAT (65 aa). Cys-549 and Cys-554 are disulfide-bonded. Residues 600–620 traverse the membrane as a helical segment; that stretch reads MFGTYNVISLVVLLNMLIAMM. Residues 615 to 977 are interaction with ITPR1, ITPR2 and ITPR3; that stretch reads MLIAMMNNSY…AHEDYVTTRL (363 aa). The Cytoplasmic portion of the chain corresponds to 621–977; the sequence is NNSYQLIADH…AHEDYVTTRL (357 aa). The disordered stretch occupies residues 767 to 790; it reads AASSASSADSDEKSHSEGNGKDKR. The span at 776–787 shows a compositional bias: basic and acidic residues; it reads SDEKSHSEGNGK. 2 positions are modified to phosphotyrosine; by FYN: Tyr-959 and Tyr-972. A PDZ-binding domain region spans residues 975 to 977; the sequence is TRL.

It belongs to the transient receptor (TC 1.A.4) family. STrpC subfamily. TRPC4 sub-subfamily. As to quaternary structure, homotetramer. Heterotetramer with TRPC1 and/or TRPC5. Forms a heteromeric ion channel with TRPC1, with a 1:3 TRPC1:TRPC4 stoichiometry. Interacts with TRPC4AP. Isoform alpha but not isoform beta interacts with ITPR1, ITPR2 and ITPR3. Interacts with NHERF1. Interacts with MX1 and RNF24. Interacts (via CIRB domain) with SESTD1 (via the spectrin 1 repeat) and SPTBN5 (via C-terminus). Interacts with CDH5 and CTNNB1. Interacts (via protein 4.1-binding domain) with EPB41L2. Interacts with PLSCR1.

Its subcellular location is the cell membrane. It catalyses the reaction Ca(2+)(in) = Ca(2+)(out). It carries out the reaction Na(+)(in) = Na(+)(out). The enzyme catalyses Li(+)(in) = Li(+)(out). The catalysed reaction is Cs(+)(in) = Cs(+)(out). May be operated by a phosphatidylinositol second messenger system activated by receptor tyrosine kinases or G-protein coupled receptors. May be activated by intracellular calcium store depletion. Its function is as follows. Forms a receptor-activated non-selective calcium permeant cation channel. Acts as a cell-cell contact-dependent endothelial calcium entry channel. Forms a homomeric ion channel or a heteromeric ion channel with TRPC1; the heteromeric ion channel has reduced calcium permeability compared to the homomeric channel. Also permeable to monovalent ions including sodium, lithium and cesium ions. Forms a non-selective a receptor-activated calcium permeant cation channel. Probably is operated by a phosphatidylinositol second messenger system activated by receptor tyrosine kinases or G-protein coupled receptors. The protein is Short transient receptor potential channel 4 (Trpc4) of Rattus norvegicus (Rat).